The chain runs to 1420 residues: DNA-directed RNA polymerase subunit beta'' (1420 aa).

The Zn(2+) site is built by Cys220, Cys295, Cys302, and Cys305.

It belongs to the RNA polymerase beta' chain family. RpoC2 subfamily. In terms of assembly, in plastids the minimal PEP RNA polymerase catalytic core is composed of four subunits: alpha, beta, beta', and beta''. When a (nuclear-encoded) sigma factor is associated with the core the holoenzyme is formed, which can initiate transcription. Zn(2+) is required as a cofactor.

The protein localises to the plastid. It localises to the chloroplast. The catalysed reaction is RNA(n) + a ribonucleoside 5'-triphosphate = RNA(n+1) + diphosphate. Functionally, DNA-dependent RNA polymerase catalyzes the transcription of DNA into RNA using the four ribonucleoside triphosphates as substrates. This is DNA-directed RNA polymerase subunit beta'' from Adiantum capillus-veneris (Maidenhair fern).